Here is a 156-residue protein sequence, read N- to C-terminus: CRIB domain-containing protein RIC11 (156 aa).

Positions 26 to 39 (IGHPTEVKHVAHIG) constitute a CRIB domain. A disordered region spans residues 87 to 156 (QDQLNISDRI…SMVSRLNSNA (70 aa)). Residues 109-120 (IHTKSKNRRKKP) are compositionally biased toward basic residues. Low complexity predominate over residues 121-142 (SSTSSPRSRPSPKSSRSMGLSK).

Functions as a downstream effector of Rho-related GTP binding proteins of the 'Rho of Plants' (ROPs) family. Participates in the propagation of ROP GTPase signals in specific cellular responses. The sequence is that of CRIB domain-containing protein RIC11 (RIC11) from Arabidopsis thaliana (Mouse-ear cress).